The following is a 391-amino-acid chain: Polyketide synthase 5 (391 aa).

Cysteine 164 is a catalytic residue.

This sequence belongs to the thiolase-like superfamily. Chalcone/stilbene synthases family. Homodimer. As to expression, expressed in fruits.

The catalysed reaction is (E)-4-coumaroyl-CoA + 3 malonyl-CoA + 3 H(+) = 2',4,4',6'-tetrahydroxychalcone + 3 CO2 + 4 CoA. The protein operates within secondary metabolite biosynthesis; flavonoid biosynthesis. Its function is as follows. Polyketide synthase producing naringenin chalcone. Can use p-coumaryl-CoA as substrate. In Rubus idaeus (Raspberry), this protein is Polyketide synthase 5 (PKS5).